Here is a 213-residue protein sequence, read N- to C-terminus: uncharacterized protein (213 aa).

Residues S114, D162, and H194 each act as charge relay system in the active site.

It belongs to the AB hydrolase superfamily. AB hydrolase 2 family.

This is an uncharacterized protein from Rickettsia bellii (strain RML369-C).